An 810-amino-acid chain; its full sequence is RING finger protein unkempt homolog (810 aa).

The tract at residues methionine 1–leucine 24 is disordered. Residues serine 10–alanine 19 show a composition bias toward low complexity. 5 consecutive C3H1-type zinc fingers follow at residues tyrosine 84–threonine 113, tyrosine 124–histidine 154, asparagine 215–lysine 241, lysine 251–threonine 285, and isoleucine 293–glutamine 321. Positions asparagine 239–glutamate 265 are disordered. Serine 240 carries the phosphoserine modification. The span at lysine 241 to arginine 253 shows a compositional bias: basic residues. Residues leucine 324–valine 343 are disordered. Residues leucine 328–threonine 338 are compositionally biased toward polar residues. 4 positions are modified to phosphoserine: serine 374, serine 378, serine 385, and serine 631. A coiled-coil region spans residues glycine 643 to glycine 723. The RING-type; degenerate zinc-finger motif lies at serine 766–glutamine 801.

The protein belongs to the unkempt family.

It localises to the cytoplasm. Functionally, sequence-specific RNA-binding protein which plays an important role in the establishment and maintenance of the early morphology of cortical neurons during embryonic development. Acts as a translation repressor and controls a translationally regulated cell morphology program to ensure proper structuring of the nervous system. Translational control depends on recognition of its binding element within target mRNAs which consists of a mandatory UAG trimer upstream of a U/A-rich motif. Associated with polysomes. The protein is RING finger protein unkempt homolog (UNK) of Homo sapiens (Human).